Consider the following 156-residue polypeptide: Small ribosomal subunit protein eS10 (156 aa).

A disordered region spans residues 91–156 (LKRQTRPEAA…FGRGRQEQEE (66 aa)). Basic and acidic residues predominate over residues 95 to 119 (TRPEAARPRPKEGAPRAQVGEDRAG).

Belongs to the eukaryotic ribosomal protein eS10 family.

The protein resides in the cytoplasm. The sequence is that of Small ribosomal subunit protein eS10 (RPS10) from Lumbricus rubellus (Humus earthworm).